The chain runs to 497 residues: MTVKKADVLLVGGGVMSTTLGTMLMQLDPSLNIVMVERLDHVAHESTYGWNNAGTGHAGYCELNYTPETGDGDIEITRALAINASFEVSLQFWSYLVERGGLPSPDEFINTCPHESFVWGESDIAFLRKRHQLLSAHHLFKDMEFSDDPRTLQDWMPLVMEHRDPMQKVAATRVRYGSDVDFGSLTRNMVEHLQKNANFELLLSHPVKSLKQTSDGRWNVQLSDSRNGGSKTIDAGFVFLGAGGGALPLLQKSGIAEGDGYGGFPVSGQWLVCKKPDIVKRHYAKVYGKAAIGAPPMSVPHLDTRIINGEPALLFGPYAGFTTKFLKTGSSFDLFGSIRANNFGPIMSVGINNMDLTRYLIKEAMQSHSDRVKSLLNYFPEAKEDDWTLAEAGQRVQIIKRDAQGRGKLEFGTELVASKDGTLAALLGASPGASVAVKAMVDVIERCFKDRLSSADWTAKLKEMIPSYGESLVDNAELLHSVRSRTLSVLGLDKKRL.

The protein belongs to the MQO family. The cofactor is FAD.

The enzyme catalyses (S)-malate + a quinone = a quinol + oxaloacetate. Its pathway is carbohydrate metabolism; tricarboxylic acid cycle; oxaloacetate from (S)-malate (quinone route): step 1/1. This Hahella chejuensis (strain KCTC 2396) protein is Probable malate:quinone oxidoreductase.